A 1012-amino-acid chain; its full sequence is Isoleucine--tRNA ligase, mitochondrial (1012 aa).

Residues 1 to 48 (MHWGLCPRGPGAAAVAAAGSFWGPARLPSRLGCLGMTRRLVVRSVAGA) constitute a mitochondrion transit peptide. Lysine 56 is subject to N6-succinyllysine. Position 74 is an N6-acetyllysine; alternate (lysine 74). Lysine 74 carries the N6-succinyllysine; alternate modification. Positions 116-126 (PYANGDPHVGH) match the 'HIGH' region motif. Lysine 194 is modified (N6-succinyllysine). Position 233 is an N6-acetyllysine (lysine 233). Lysine 241 is modified (N6-acetyllysine; alternate). Lysine 241 is subject to N6-succinyllysine; alternate. 2 positions are modified to N6-succinyllysine: lysine 479 and lysine 500. ATP contacts are provided by lysine 664 and lysine 667. A 'KMSKS' region motif is present at residues 664 to 668 (KMSKS). Lysine 725 is modified (N6-acetyllysine). Lysine 775 and lysine 781 each carry N6-acetyllysine; alternate. Residues lysine 775 and lysine 781 each carry the N6-succinyllysine; alternate modification.

This sequence belongs to the class-I aminoacyl-tRNA synthetase family.

The protein localises to the mitochondrion matrix. It carries out the reaction tRNA(Ile) + L-isoleucine + ATP = L-isoleucyl-tRNA(Ile) + AMP + diphosphate. In terms of biological role, aminoacyl-tRNA synthetase that catalyzes the specific attachment of isoleucine to its cognate tRNA (tRNA(Ile)). The chain is Isoleucine--tRNA ligase, mitochondrial from Mus musculus (Mouse).